The following is a 391-amino-acid chain: Elongation factor Tu 1 (391 aa).

The tr-type G domain maps to 10-201 (KLHVNIGTIG…EVDRYIPTPE (192 aa)). Residues 19-26 (GHVDHGKT) are G1. Position 19–26 (19–26 (GHVDHGKT)) interacts with GTP. Thr26 is a binding site for Mg(2+). The interval 55-59 (GITIS) is G2. A G3 region spans residues 76 to 79 (DCPG). GTP-binding positions include 76 to 80 (DCPGH) and 131 to 134 (NKVD). Positions 131–134 (NKVD) are G4. The tract at residues 169 to 171 (SAL) is G5.

This sequence belongs to the TRAFAC class translation factor GTPase superfamily. Classic translation factor GTPase family. EF-Tu/EF-1A subfamily. As to quaternary structure, monomer.

Its subcellular location is the cytoplasm. The catalysed reaction is GTP + H2O = GDP + phosphate + H(+). In terms of biological role, GTP hydrolase that promotes the GTP-dependent binding of aminoacyl-tRNA to the A-site of ribosomes during protein biosynthesis. The polypeptide is Elongation factor Tu 1 (Bartonella bacilliformis (strain ATCC 35685 / KC583 / Herrer 020/F12,63)).